The chain runs to 502 residues: Glutamate--tRNA ligase (502 aa).

A 'HIGH' region motif is present at residues 12–22; the sequence is PSPTGYLHVGG. A 'KMSKS' region motif is present at residues 259–263; that stretch reads KLSKR. K262 serves as a coordination point for ATP.

This sequence belongs to the class-I aminoacyl-tRNA synthetase family. Glutamate--tRNA ligase type 1 subfamily. In terms of assembly, monomer.

Its subcellular location is the cytoplasm. The enzyme catalyses tRNA(Glu) + L-glutamate + ATP = L-glutamyl-tRNA(Glu) + AMP + diphosphate. Functionally, catalyzes the attachment of glutamate to tRNA(Glu) in a two-step reaction: glutamate is first activated by ATP to form Glu-AMP and then transferred to the acceptor end of tRNA(Glu). In Chlorobium phaeobacteroides (strain DSM 266 / SMG 266 / 2430), this protein is Glutamate--tRNA ligase.